A 366-amino-acid polypeptide reads, in one-letter code: Ribosomal RNA large subunit methyltransferase M (366 aa).

S-adenosyl-L-methionine contacts are provided by residues Ser-188, 221–224, Asp-240, Asp-260, and Asp-277; that span reads CPGG. The active-site Proton acceptor is the Lys-306.

The protein belongs to the class I-like SAM-binding methyltransferase superfamily. RNA methyltransferase RlmE family. RlmM subfamily. Monomer.

The protein localises to the cytoplasm. It carries out the reaction cytidine(2498) in 23S rRNA + S-adenosyl-L-methionine = 2'-O-methylcytidine(2498) in 23S rRNA + S-adenosyl-L-homocysteine + H(+). Its function is as follows. Catalyzes the 2'-O-methylation at nucleotide C2498 in 23S rRNA. The protein is Ribosomal RNA large subunit methyltransferase M of Erwinia tasmaniensis (strain DSM 17950 / CFBP 7177 / CIP 109463 / NCPPB 4357 / Et1/99).